The sequence spans 160 residues: MIRIGHGFDVHAFGEKRPLIIGGVTIPYHTGFIAHSDGDVALHALTDALLGAAALGDIGKLFPDTDQQYKNIDSRKLLIEAYRQVQTKGYQISNIDITIIAQAPKMRPHIDNMRQLIANDLNCDIDQINIKATTTEKLGFTGRGEGIACEAVALLSKKTV.

A divalent metal cation-binding residues include Asp-9 and His-11. 4-CDP-2-C-methyl-D-erythritol 2-phosphate is bound by residues 9–11 (DVH) and 35–36 (HS). Position 43 (His-43) interacts with a divalent metal cation. 4-CDP-2-C-methyl-D-erythritol 2-phosphate-binding positions include 57-59 (DIG), 62-66 (FPDTD), 133-136 (TTTE), Phe-140, and Arg-143.

This sequence belongs to the IspF family. In terms of assembly, homotrimer. Requires a divalent metal cation as cofactor.

The enzyme catalyses 4-CDP-2-C-methyl-D-erythritol 2-phosphate = 2-C-methyl-D-erythritol 2,4-cyclic diphosphate + CMP. It functions in the pathway isoprenoid biosynthesis; isopentenyl diphosphate biosynthesis via DXP pathway; isopentenyl diphosphate from 1-deoxy-D-xylulose 5-phosphate: step 4/6. Its function is as follows. Involved in the biosynthesis of isopentenyl diphosphate (IPP) and dimethylallyl diphosphate (DMAPP), two major building blocks of isoprenoid compounds. Catalyzes the conversion of 4-diphosphocytidyl-2-C-methyl-D-erythritol 2-phosphate (CDP-ME2P) to 2-C-methyl-D-erythritol 2,4-cyclodiphosphate (ME-CPP) with a corresponding release of cytidine 5-monophosphate (CMP). This Haemophilus ducreyi (strain 35000HP / ATCC 700724) protein is 2-C-methyl-D-erythritol 2,4-cyclodiphosphate synthase.